We begin with the raw amino-acid sequence, 160 residues long: Cytochrome c-type biogenesis protein CcmE (160 aa).

The Cytoplasmic portion of the chain corresponds to 1–9; sequence MRGLKKKRR. Residues 10-30 traverse the membrane as a helical; Signal-anchor for type II membrane protein segment; the sequence is IQIIAIAAVALTIATIMIGTA. Topologically, residues 31–160 are periplasmic; it reads MRDGINFFRS…DGGYGGASGS (130 aa). The heme site is built by His123 and Tyr127. The disordered stretch occupies residues 141–160; that stretch reads VYKDPNATDADGGYGGASGS.

This sequence belongs to the CcmE/CycJ family.

It is found in the cell inner membrane. Functionally, heme chaperone required for the biogenesis of c-type cytochromes. Transiently binds heme delivered by CcmC and transfers the heme to apo-cytochromes in a process facilitated by CcmF and CcmH. The sequence is that of Cytochrome c-type biogenesis protein CcmE from Dinoroseobacter shibae (strain DSM 16493 / NCIMB 14021 / DFL 12).